Reading from the N-terminus, the 192-residue chain is 3-hydroxyanthranilate 3,4-dioxygenase 1 (192 aa).

R50 lines the O2 pocket. The Fe cation site is built by H54, E60, and H102. Residue E60 participates in substrate binding. 2 residues coordinate substrate: R106 and E116. Residues C131, C134, C168, and C171 each contribute to the a divalent metal cation site.

Belongs to the 3-HAO family. Fe(2+) serves as cofactor.

The protein localises to the cytoplasm. The catalysed reaction is 3-hydroxyanthranilate + O2 = (2Z,4Z)-2-amino-3-carboxymuconate 6-semialdehyde. Its pathway is cofactor biosynthesis; NAD(+) biosynthesis; quinolinate from L-kynurenine: step 3/3. Functionally, catalyzes the oxidative ring opening of 3-hydroxyanthranilate to 2-amino-3-carboxymuconate semialdehyde, which spontaneously cyclizes to quinolinate. The chain is 3-hydroxyanthranilate 3,4-dioxygenase 1 (bna1-1) from Aspergillus clavatus (strain ATCC 1007 / CBS 513.65 / DSM 816 / NCTC 3887 / NRRL 1 / QM 1276 / 107).